Here is a 175-residue protein sequence, read N- to C-terminus: Cytochrome c homolog (175 aa).

The Cytoplasmic portion of the chain corresponds to 1-8 (MTGKELNK). Residues 9-29 (IVAAILFASLIAMIVGFIANI) form a helical; Signal-anchor membrane-spanning segment. The Periplasmic segment spans residues 30 to 175 (LYKPNLHVLH…LFLKNYVHDQ (146 aa)). The heme c site is built by Cys-84, Cys-87, His-88, and Met-150.

The protein belongs to the cytochrome c family. In terms of processing, binds 1 heme c group covalently per subunit.

It localises to the cell membrane. May be involved in electron transfer from bc1 complex to aa3. The sequence is that of Cytochrome c homolog (cycM) from Rickettsia prowazekii (strain Madrid E).